The primary structure comprises 600 residues: Baculoviral IAP repeat-containing protein 3 (600 aa).

A BIR 1 repeat occupies 27-94 (ELYRLSTYSA…RKLYPSCNFV (68 aa)). S138 is subject to Phosphoserine. BIR repeat units follow at residues 167-233 (EKAR…CPFL) and 253-320 (HAAR…CEYL). Residues C290, C293, H310, and C317 each contribute to the Zn(2+) site. The 90-residue stretch at 436–525 (EESDDLALIR…ALYRDIFVQQ (90 aa)) folds into the CARD domain. The RING-type zinc-finger motif lies at 553 to 588 (CKVCMDREVSIVFIPCGHLVVCKDCAPSLRKCPICR).

It belongs to the IAP family. As to quaternary structure, interacts with PRSS25; the interaction inhibits apoptotic suppressor activity. The BIR motifs region interacts with TNF receptor associated factors 1 and 2 (TRAF1 and TRAF2) to form a heteromeric complex, which is then recruited to the tumor necrosis factor receptor 2 (TNFR2). Interaction with TRAF2 is required for ubiquitination of IKBKE, degradation of NFKBIA and activation of NF-kappa-B. Interacts with RIP1, RIP2, RIP3, RIP4 and USP19. Auto-ubiquitinated and degraded by the proteasome in apoptotic cells.

The protein localises to the cytoplasm. It localises to the nucleus. The enzyme catalyses S-ubiquitinyl-[E2 ubiquitin-conjugating enzyme]-L-cysteine + [acceptor protein]-L-lysine = [E2 ubiquitin-conjugating enzyme]-L-cysteine + N(6)-ubiquitinyl-[acceptor protein]-L-lysine.. Its activity is regulated as follows. USP19 regulates the stability of BIRC3/c-IAP2 by preventing its ubiquitination. Multi-functional protein which regulates not only caspases and apoptosis, but also modulates inflammatory signaling and immunity, mitogenic kinase signaling and cell proliferation, as well as cell invasion and metastasis. Acts as an E3 ubiquitin-protein ligase regulating NF-kappa-B signaling and regulates both canonical and non-canonical NF-kappa-B signaling by acting in opposite directions: acts as a positive regulator of the canonical pathway and suppresses constitutive activation of non-canonical NF-kappa-B signaling. The target proteins for its E3 ubiquitin-protein ligase activity include: RIPK1, RIPK2, RIPK3, RIPK4, CASP3, CASP7, CASP8, IKBKE, TRAF1, and BCL10. Acts as an important regulator of innate immune signaling via regulation of Toll-like receptors (TLRs), Nodlike receptors (NLRs) and RIG-I like receptors (RLRs), collectively referred to as pattern recognition receptors (PRRs). Protects cells from spontaneous formation of the ripoptosome, a large multi-protein complex that has the capability to kill cancer cells in a caspase-dependent and caspase-independent manner. Suppresses ripoptosome formation by ubiquitinating RIPK1 and CASP8. In Mus musculus (Mouse), this protein is Baculoviral IAP repeat-containing protein 3 (Birc3).